The chain runs to 402 residues: uncharacterized protein (402 aa).

This is an uncharacterized protein from Saccharomyces cerevisiae (strain ATCC 204508 / S288c) (Baker's yeast).